A 68-amino-acid chain; its full sequence is Large ribosomal subunit protein bL35 (68 aa).

This sequence belongs to the bacterial ribosomal protein bL35 family.

This is Large ribosomal subunit protein bL35 from Pelagibacter ubique (strain HTCC1062).